The sequence spans 186 residues: Ribosome-recycling factor (186 aa).

The protein belongs to the RRF family.

Its subcellular location is the cytoplasm. Functionally, responsible for the release of ribosomes from messenger RNA at the termination of protein biosynthesis. May increase the efficiency of translation by recycling ribosomes from one round of translation to another. The chain is Ribosome-recycling factor from Paracidovorax citrulli (strain AAC00-1) (Acidovorax citrulli).